A 130-amino-acid chain; its full sequence is ATP synthase epsilon chain (130 aa).

Belongs to the ATPase epsilon chain family. In terms of assembly, F-type ATPases have 2 components, CF(1) - the catalytic core - and CF(0) - the membrane proton channel. CF(1) has five subunits: alpha(3), beta(3), gamma(1), delta(1), epsilon(1). CF(0) has three main subunits: a, b and c.

Its subcellular location is the cell membrane. Functionally, produces ATP from ADP in the presence of a proton gradient across the membrane. The polypeptide is ATP synthase epsilon chain (Nocardia farcinica (strain IFM 10152)).